The following is a 124-amino-acid chain: MATVNQLVRKPRLRKIVKTNVPALEGSPQKRGVCTRVYTTTPKKPNSALRKVCRVRLTNGFEVTAYIGGEGHNLQEHSVILIRGGRVKDLPGVRYHIVRGSLDCAGVKERKKGRSKYGVKKAKV.

At aspartate 89 the chain carries 3-methylthioaspartic acid.

It belongs to the universal ribosomal protein uS12 family. As to quaternary structure, part of the 30S ribosomal subunit. Contacts proteins S8 and S17. May interact with IF1 in the 30S initiation complex.

Functionally, with S4 and S5 plays an important role in translational accuracy. In terms of biological role, interacts with and stabilizes bases of the 16S rRNA that are involved in tRNA selection in the A site and with the mRNA backbone. Located at the interface of the 30S and 50S subunits, it traverses the body of the 30S subunit contacting proteins on the other side and probably holding the rRNA structure together. The combined cluster of proteins S8, S12 and S17 appears to hold together the shoulder and platform of the 30S subunit. This Buchnera aphidicola subsp. Schizaphis graminum (strain Sg) protein is Small ribosomal subunit protein uS12.